The chain runs to 365 residues: DNA replication and repair protein RecF (365 aa).

ATP is bound at residue 30–37; the sequence is GNNGMGKT.

The protein belongs to the RecF family.

Its subcellular location is the cytoplasm. In terms of biological role, the RecF protein is involved in DNA metabolism; it is required for DNA replication and normal SOS inducibility. RecF binds preferentially to single-stranded, linear DNA. It also seems to bind ATP. The protein is DNA replication and repair protein RecF of Parabacteroides distasonis (strain ATCC 8503 / DSM 20701 / CIP 104284 / JCM 5825 / NCTC 11152).